The sequence spans 343 residues: Aspartate carbamoyltransferase catalytic subunit (343 aa).

Carbamoyl phosphate-binding residues include Arg91 and Thr92. Lys119 contributes to the L-aspartate binding site. The carbamoyl phosphate site is built by Arg141, His171, and Gln174. Residues Arg204 and Arg259 each contribute to the L-aspartate site. Gly300 and Pro301 together coordinate carbamoyl phosphate.

The protein belongs to the aspartate/ornithine carbamoyltransferase superfamily. ATCase family. As to quaternary structure, heterododecamer (2C3:3R2) of six catalytic PyrB chains organized as two trimers (C3), and six regulatory PyrI chains organized as three dimers (R2).

The catalysed reaction is carbamoyl phosphate + L-aspartate = N-carbamoyl-L-aspartate + phosphate + H(+). The protein operates within pyrimidine metabolism; UMP biosynthesis via de novo pathway; (S)-dihydroorotate from bicarbonate: step 2/3. Catalyzes the condensation of carbamoyl phosphate and aspartate to form carbamoyl aspartate and inorganic phosphate, the committed step in the de novo pyrimidine nucleotide biosynthesis pathway. The protein is Aspartate carbamoyltransferase catalytic subunit of Burkholderia vietnamiensis (strain G4 / LMG 22486) (Burkholderia cepacia (strain R1808)).